A 406-amino-acid chain; its full sequence is Kelch domain-containing protein 2 (406 aa).

Kelch repeat units lie at residues 31-85 (ERSG…NTEG), 92-136 (SGSC…ERID), 148-207 (LGVW…TWSQ), 221-259 (HACA…NELI), 271-311 (HSLT…IQFN), and 322-359 (HTAC…IFSV).

As to quaternary structure, component of a CRL2(KLHDC2) E3 ubiquitin-protein ligase complex, also named ECS(KLHDC2) complex, composed of CUL2, Elongin BC (ELOB and ELOC), RBX1 and substrate-specific adapter KLHDC2. May form oligomers as a KLHDC2-ELOB-ELOC complex; this interaction is autoinhibitory for the E3 ligase complex as the substrate-binding site of KLHDC2 is blocked in the oligomer. Interacts with CREB3; interaction is direct and specific as it does not interact with CREB1, ATF4, ATF6, JUN, FOS, CEBPA or herpes simplex virus transactivator VP16. Autoubiquitinated by the CRL2(KLHDC2) E3 ligase complex. In terms of tissue distribution, widely expressed, with high levels in skeletal muscle, heart, pancreas and liver. Undetectable in peripheral blood leukocytes.

The protein localises to the nucleus. Its pathway is protein modification; protein ubiquitination. Functionally, substrate-recognition component of a Cul2-RING (CRL2) E3 ubiquitin-protein ligase complex of the DesCEND (destruction via C-end degrons) pathway, which recognizes a C-degron located at the extreme C terminus of target proteins, leading to their ubiquitination and degradation. The C-degron recognized by the DesCEND pathway is usually a motif of less than ten residues and can be present in full-length proteins, truncated proteins or proteolytically cleaved forms. The CRL2(KLHDC2) complex specifically recognizes proteins with a diglycine (Gly-Gly) at the C-terminus, leading to their ubiquitination and degradation. The CRL2(KLHDC2) complex mediates ubiquitination and degradation of truncated SELENOK and SELENOS selenoproteins produced by failed UGA/Sec decoding, which end with a diglycine. The CRL2(KLHDC2) complex also recognizes proteolytically cleaved proteins ending with Gly-Gly, such as the N-terminal fragment of USP1, leading to their degradation. May also act as an indirect repressor of CREB3-mediated transcription by interfering with CREB3-DNA-binding. This is Kelch domain-containing protein 2 from Homo sapiens (Human).